The sequence spans 120 residues: Large ribosomal subunit protein bL12 (120 aa).

It belongs to the bacterial ribosomal protein bL12 family. In terms of assembly, homodimer. Part of the ribosomal stalk of the 50S ribosomal subunit. Forms a multimeric L10(L12)X complex, where L10 forms an elongated spine to which 2 to 4 L12 dimers bind in a sequential fashion. Binds GTP-bound translation factors.

Forms part of the ribosomal stalk which helps the ribosome interact with GTP-bound translation factors. Is thus essential for accurate translation. The protein is Large ribosomal subunit protein bL12 of Listeria welshimeri serovar 6b (strain ATCC 35897 / DSM 20650 / CCUG 15529 / CIP 8149 / NCTC 11857 / SLCC 5334 / V8).